A 929-amino-acid polypeptide reads, in one-letter code: Isoleucine--tRNA ligase (929 aa).

Residues 57–67 (PYANGNIHVGH) carry the 'HIGH' region motif. E554 contacts L-isoleucyl-5'-AMP. The 'KMSKS' region motif lies at 595–599 (KMSKS). Position 598 (K598) interacts with ATP. C888, C891, C908, and C911 together coordinate Zn(2+).

It belongs to the class-I aminoacyl-tRNA synthetase family. IleS type 1 subfamily. Monomer. Zn(2+) serves as cofactor.

It is found in the cytoplasm. It carries out the reaction tRNA(Ile) + L-isoleucine + ATP = L-isoleucyl-tRNA(Ile) + AMP + diphosphate. Functionally, catalyzes the attachment of isoleucine to tRNA(Ile). As IleRS can inadvertently accommodate and process structurally similar amino acids such as valine, to avoid such errors it has two additional distinct tRNA(Ile)-dependent editing activities. One activity is designated as 'pretransfer' editing and involves the hydrolysis of activated Val-AMP. The other activity is designated 'posttransfer' editing and involves deacylation of mischarged Val-tRNA(Ile). The sequence is that of Isoleucine--tRNA ligase from Streptococcus thermophilus (strain CNRZ 1066).